A 104-amino-acid polypeptide reads, in one-letter code: Small ribosomal subunit protein uS10 (104 aa).

The protein belongs to the universal ribosomal protein uS10 family. In terms of assembly, part of the 30S ribosomal subunit.

Involved in the binding of tRNA to the ribosomes. The chain is Small ribosomal subunit protein uS10 from Maricaulis maris (strain MCS10) (Caulobacter maris).